The following is a 474-amino-acid chain: tRNA-2-methylthio-N(6)-dimethylallyladenosine synthase (474 aa).

Positions 3 to 120 constitute an MTTase N-terminal domain; it reads KKLHIKTWGC…LPEMINSVRG (118 aa). The [4Fe-4S] cluster site is built by Cys12, Cys49, Cys83, Cys157, Cys161, and Cys164. One can recognise a Radical SAM core domain in the interval 143-375; the sequence is RAEGPTAFVS…QERINQQAMA (233 aa). A TRAM domain is found at 378 to 441; that stretch reads RRMLGTVQRI…TNSLRGKIVR (64 aa).

The protein belongs to the methylthiotransferase family. MiaB subfamily. As to quaternary structure, monomer. Requires [4Fe-4S] cluster as cofactor.

Its subcellular location is the cytoplasm. The enzyme catalyses N(6)-dimethylallyladenosine(37) in tRNA + (sulfur carrier)-SH + AH2 + 2 S-adenosyl-L-methionine = 2-methylsulfanyl-N(6)-dimethylallyladenosine(37) in tRNA + (sulfur carrier)-H + 5'-deoxyadenosine + L-methionine + A + S-adenosyl-L-homocysteine + 2 H(+). Catalyzes the methylthiolation of N6-(dimethylallyl)adenosine (i(6)A), leading to the formation of 2-methylthio-N6-(dimethylallyl)adenosine (ms(2)i(6)A) at position 37 in tRNAs that read codons beginning with uridine. This is tRNA-2-methylthio-N(6)-dimethylallyladenosine synthase from Klebsiella pneumoniae subsp. pneumoniae (strain ATCC 700721 / MGH 78578).